Here is a 445-residue protein sequence, read N- to C-terminus: Signal recognition particle 54 kDa protein (445 aa).

GTP is bound by residues 106-113, 186-190, and 244-247; these read GLQGSGKT, DTAGR, and TKLD.

Belongs to the GTP-binding SRP family. SRP54 subfamily. Part of the signal recognition particle protein translocation system, which is composed of SRP and FtsY. Archaeal SRP consists of a 7S RNA molecule of 300 nucleotides and two protein subunits: SRP54 and SRP19.

The protein resides in the cytoplasm. It carries out the reaction GTP + H2O = GDP + phosphate + H(+). Functionally, involved in targeting and insertion of nascent membrane proteins into the cytoplasmic membrane. Binds to the hydrophobic signal sequence of the ribosome-nascent chain (RNC) as it emerges from the ribosomes. The SRP-RNC complex is then targeted to the cytoplasmic membrane where it interacts with the SRP receptor FtsY. The protein is Signal recognition particle 54 kDa protein of Methanobrevibacter smithii (strain ATCC 35061 / DSM 861 / OCM 144 / PS).